Consider the following 1025-residue polypeptide: Synapsin (1025 aa).

4 disordered regions span residues 1–94, 439–784, 872–910, and 995–1025; these read MKRG…SRES, VCRP…NYGS, YDSNSIASQGEGLNNPSDLPSYTRPSYSRSESNASKHSD, and DFSDSGSMSSIGSHTKRWSASKEEDDELDLK. Pro residues predominate over residues 34 to 52; the sequence is TKPPVAGGPPNMPPPPAPG. Over residues 454–463 the composition is skewed to low complexity; the sequence is SRSSVSSRAE. Residues 472 to 492 are compositionally biased toward pro residues; that stretch reads PTPPLPAGPRPAPMGGPPPIP. Composition is skewed to low complexity over residues 499–546 and 594–626; these read VGSI…SSVS and SETSSGSGPGSVPSSAGPGSGFSSSFLGKQFSF. A Phosphoserine modification is found at S539. The segment covering 651–673 has biased composition (polar residues); that stretch reads TTASSAVRPESSVSVSDSRNTDT. The span at 690–702 shows a compositional bias: basic and acidic residues; sequence QQERVNPFDKEPS. Positions 703–725 are enriched in low complexity; sequence KSGSAASIHTSSSSSISSSSISS. The span at 726–735 shows a compositional bias: polar residues; it reads RINRNGNAIQ. Residues 736-749 are compositionally biased toward pro residues; it reads SPPPPAGPPPPPPT. Residues 750-759 show a composition bias toward polar residues; the sequence is NVTAVGSNAN. A compositionally biased stretch (low complexity) spans 760 to 772; that stretch reads SSSGYRNSFSSSL. Polar residues predominate over residues 872–904; it reads YDSNSIASQGEGLNNPSDLPSYTRPSYSRSESN. Over residues 995 to 1007 the composition is skewed to low complexity; that stretch reads DFSDSGSMSSIGS.

The protein belongs to the synapsin family. Identified in a complex with Syt1 and nwk. As to expression, widely expressed in the embryonic and adult nervous system synaptic terminals.

The protein resides in the synapse. Plays a significant role in nervous system function, which is subtle at the cellular level but manifests itself in complex behavior. This chain is Synapsin (Syn), found in Drosophila melanogaster (Fruit fly).